Reading from the N-terminus, the 308-residue chain is D-alanine--D-alanine ligase (308 aa).

The 198-residue stretch at 104-301 folds into the ATP-grasp domain; it reads KQIWQGSDLP…FDELCVAILD (198 aa). 130-185 contacts ATP; sequence IAELGLPVIIKPVHEGSSVGMSKVEKAEDFAAAIEKATQHDAVVMAEKWITGREFT. Residues aspartate 255, glutamate 268, and asparagine 270 each contribute to the Mg(2+) site.

The protein belongs to the D-alanine--D-alanine ligase family. Mg(2+) serves as cofactor. Mn(2+) is required as a cofactor.

Its subcellular location is the cytoplasm. It carries out the reaction 2 D-alanine + ATP = D-alanyl-D-alanine + ADP + phosphate + H(+). Its pathway is cell wall biogenesis; peptidoglycan biosynthesis. Functionally, cell wall formation. The polypeptide is D-alanine--D-alanine ligase (Acinetobacter baumannii (strain AB307-0294)).